We begin with the raw amino-acid sequence, 49 residues long: Omega-segestritoxin-Sf1a (49 aa).

4 disulfides stabilise this stretch: Cys3-Cys22, Cys10-Cys27, Cys21-Cys48, and Cys29-Cys46.

In terms of tissue distribution, expressed by the venom gland.

The protein localises to the secreted. Functionally, potent and selective blocker of N-type voltage-gated calcium channels (Cav2.2/CACNA1B). Also blocks vertebrate Cav2.1/CACNA1A (P/Q-type) and Cav1.2/CACNA1C (L-type) channels at very high concentration (2 micromolar). In Segestria florentina (Tube-web spider), this protein is Omega-segestritoxin-Sf1a.